The following is a 526-amino-acid chain: Glucose-6-phosphate isomerase (526 aa).

The Proton donor role is filled by Glu-323. Active-site residues include His-352 and Lys-454.

Belongs to the GPI family.

Its subcellular location is the cytoplasm. The catalysed reaction is alpha-D-glucose 6-phosphate = beta-D-fructose 6-phosphate. It participates in carbohydrate biosynthesis; gluconeogenesis. It functions in the pathway carbohydrate degradation; glycolysis; D-glyceraldehyde 3-phosphate and glycerone phosphate from D-glucose: step 2/4. Its function is as follows. Catalyzes the reversible isomerization of glucose-6-phosphate to fructose-6-phosphate. This Prochlorococcus marinus subsp. pastoris (strain CCMP1986 / NIES-2087 / MED4) protein is Glucose-6-phosphate isomerase.